Here is a 585-residue protein sequence, read N- to C-terminus: Suppressor of mec-8 and unc-52 protein homolog 2 (585 aa).

Residues 1-14 (MKPSKSHHKEKTAR) are compositionally biased toward basic residues. Disordered regions lie at residues 1 to 52 (MKPS…SSFH) and 219 to 324 (KKKK…PRDK). Positions 15–39 (RREEKLEESDNPKYRDRAKERRENQ) are enriched in basic and acidic residues. R-[ED] repeat units lie at residues 16-17 (RE), 29-30 (RD), 36-37 (RE), and 258-259 (RE). The span at 276-288 (LSTKQEEPPVART) shows a compositional bias: basic and acidic residues. R-[ED] repeat units follow at residues 322 to 323 (RD), 436 to 437 (RD), 445 to 446 (RE), 450 to 451 (RE), 540 to 541 (RD), and 542 to 543 (RD). Positions 523–585 (FQFGVKMQDG…EAQTPKRSKH (63 aa)) are disordered. Residues 530–548 (QDGRKTRKQNRDRDQKLNN) are compositionally biased toward basic and acidic residues. T579 carries the phosphothreonine modification.

It belongs to the RED family. As to quaternary structure, component of the spliceosome. Interacts with SMU1. As to expression, highly expressed in seedlings at 7 days after germination, young flowers before anthesis and developing siliques. Expressed at lower levels in roots, expanding leaves, open flowers, dry seeds and inflorescences. Not detected in senescing leaves.

Its subcellular location is the nucleus. Auxiliary spliceosomal protein involved in splicing of specific pre-mRNAs that affect multiple aspects of development. The protein is Suppressor of mec-8 and unc-52 protein homolog 2 (SMU2) of Arabidopsis thaliana (Mouse-ear cress).